The sequence spans 648 residues: 5-aminolevulinate synthase, mitochondrial (648 aa).

The transit peptide at 1 to 26 (MEALLQQSRAMCPFLKRSSPNTLRSL) directs the protein to the mitochondrion. Positions 69–109 (KRFTSSAAGVPGAGAGTPKPTRGSPGKRALHSTGGNGANMS) are disordered. Arg170, Ser283, and Lys302 together coordinate substrate. Residues Ser335, His363, and Thr409 each coordinate pyridoxal 5'-phosphate. Lys412 is a catalytic residue. The residue at position 412 (Lys412) is an N6-(pyridoxal phosphate)lysine. Pyridoxal 5'-phosphate is bound by residues Thr441 and Thr442. Thr527 provides a ligand contact to substrate.

The protein belongs to the class-II pyridoxal-phosphate-dependent aminotransferase family. Homodimer. Pyridoxal 5'-phosphate serves as cofactor.

Its subcellular location is the mitochondrion matrix. The enzyme catalyses succinyl-CoA + glycine + H(+) = 5-aminolevulinate + CO2 + CoA. It participates in porphyrin-containing compound metabolism; protoporphyrin-IX biosynthesis; 5-aminolevulinate from glycine: step 1/1. Its function is as follows. Catalyzes the synthesis of 5-aminolevulinate (ALA) from succinyl-CoA and glycine, the first and rate-limiting step in heme biosynthesis. In Emericella nidulans (strain FGSC A4 / ATCC 38163 / CBS 112.46 / NRRL 194 / M139) (Aspergillus nidulans), this protein is 5-aminolevulinate synthase, mitochondrial (hemA).